We begin with the raw amino-acid sequence, 418 residues long: MALVLHTFDGNKNAFKALIAAEYSGVKVELAKNFQMGVSNKTPEYLKMNPIGKVPILETPDGPVFESNAIARYVTRSKSDNPLYGSSLIEYAHIEQWIDFSATEVDANTGKWLFPRLGFAPYVAVSEEAAIAALKRSLGALNTHLASNTYLVGHSVTLADIVMTCNLYMGFARIMTKNFTSEFPHVERYFWTMVNQPNFKKVMGDVKQADSVPQVQKKAAAPKEQKPKEAKKEAPKEAPKPKAAEKPEEEEEAPKPKPKNPLDLLPPSKMILDEWKRLYSNTKTNFREVAIKGFWDMYDPEGYSLWFCDYKYNDENTVSFVTMNKVGGFLQRMDLCRKYAFGKMLVIGSEPPFKVKGLWLFRGPEIPKFVMDEVYDMELYEWTKVDISDEAQKERVSAMIEDLEPFEGEALLDAKCFK.

One can recognise a GST N-terminal domain in the interval 1–82; sequence MALVLHTFDG…YVTRSKSDNP (82 aa). Positions 87 to 213 constitute a GST C-terminal domain; it reads SLIEYAHIEQ…GDVKQADSVP (127 aa). Residues 211–265 form a disordered region; that stretch reads SVPQVQKKAAAPKEQKPKEAKKEAPKEAPKPKAAEKPEEEEEAPKPKPKNPLDLL. The span at 221-246 shows a compositional bias: basic and acidic residues; that stretch reads APKEQKPKEAKKEAPKEAPKPKAAEK. The EF-1-gamma C-terminal domain occupies 258–418; that stretch reads PKNPLDLLPP…EALLDAKCFK (161 aa).

As to quaternary structure, EF-1 is composed of four subunits: alpha, beta, delta, and gamma.

Functionally, probably plays a role in anchoring the complex to other cellular components. The protein is Elongation factor 1-gamma 1 of Oryza sativa subsp. japonica (Rice).